Here is a 245-residue protein sequence, read N- to C-terminus: AA9 family lytic polysaccharide monooxygenase B (245 aa).

A signal peptide spans 1–18; sequence MKSAIFAAAVLGAAGVSA. Positions 19 and 105 each coordinate Cu(2+). The cysteines at positions 116 and 120 are disulfide-linked. Residues histidine 179 and glutamine 188 each contribute to the O2 site. Residue tyrosine 190 coordinates Cu(2+).

Belongs to the polysaccharide monooxygenase AA9 family. It depends on Cu(2+) as a cofactor.

The protein resides in the secreted. The catalysed reaction is [(1-&gt;4)-beta-D-glucosyl]n+m + reduced acceptor + O2 = 4-dehydro-beta-D-glucosyl-[(1-&gt;4)-beta-D-glucosyl]n-1 + [(1-&gt;4)-beta-D-glucosyl]m + acceptor + H2O.. Its function is as follows. Lytic polysaccharide monooxygenase (LPMO) that depolymerizes crystalline and amorphous polysaccharides via the oxidation of scissile alpha- or beta-(1-4)-glycosidic bonds, yielding C1 or C4 oxidation products. Catalysis by LPMOs requires the reduction of the active-site copper from Cu(II) to Cu(I) by a reducing agent and H(2)O(2) or O(2) as a cosubstrate. Active on hemicelluloses, including xylan, glucomannan, and xyloglucan. Has no activity on ivory nut mannan (INM), a linear beta-1,4-linked mannan without substitutions. The chain is AA9 family lytic polysaccharide monooxygenase B from Malbranchea cinnamomea (Thermophilic fungus).